Here is a 207-residue protein sequence, read N- to C-terminus: Ras-related protein Rab-8A (207 aa).

GTP-binding residues include Ser-17, Gly-18, Val-19, Gly-20, Lys-21, Thr-22, Cys-23, Ser-35, Ser-39, and Thr-40. A Mg(2+)-binding site is contributed by Thr-22. 2 short sequence motifs (switch) span residues 31-45 and 63-80; these read DAFNSTFISTIGIDF and DTAGQERFRTITTAYYRG. Residues Thr-40 and Asp-63 each coordinate Mg(2+). GTP is bound at residue Gly-66. Position 72 is a phosphothreonine (Thr-72). The GTP site is built by Asn-121, Lys-122, Asp-124, Ala-152, and Lys-153. Phosphoserine is present on residues Ser-181 and Ser-185. Cys-204 bears the Cysteine methyl ester mark. A lipid anchor (S-geranylgeranyl cysteine) is attached at Cys-204. A propeptide spans 205-207 (removed in mature form); the sequence is VLL.

The protein belongs to the small GTPase superfamily. Rab family. As to quaternary structure, interacts (GTP-bound form) with MICALL1; regulates RAB8A association with recycling endosomes. Interacts with MICALL2; competes with RAB13 and is involved in E-cadherin endocytic recycling. Interacts (GTP-bound form) with MICAL1, MICALCL, MICAL3, EHBP1 and EHBP1L1; at least in case of MICAL1, MICALCL, MICAL3 and EHBP1L1 two molecules of RAB8A can bind to one molecule of the effector protein; ternary complexes of RAB8A, RAB13 and either MICAL1 or EHBP1L1 are possible. Interacts with EHD1. Interacts with MAP4K2 and SYTL4. Interacts with SGSM1 and SGSM3. Interacts with RABIF, RIMS2, RPH3A and RPH3A. Interacts with OPTN. Interacts with RAB3IP, RAB3IP functions as guanine exchange factor (GEF). Interacts with MYO5B. Interacts with CIMAP3. Interacts with BIRC6/bruce. Interacts with OCRL. Interacts with AHI1. Interacts with DCDC1. Interacts with LRRK2; interaction facilitates phosphorylation of Thr-72. Interacts with RAB31P, GDI1, GDI2, CHM, CHML, RABGGTA, RABGGTB, TBC1D15 and INPP5B; these interactions are dependent on Thr-72 not being phosphorylated. Interacts with RILPL1 and RILPL2; these interactions are dependent on the phosphorylation of Thr-72 by LRRK2. Interacts with DZIP1; prevents inhibition by the GDP-dissociation inhibitor GDI2. Interacts (in GDP-bound form) with RAB3IP/Rabin8, RAB3IP functions as guanine exchange factor (GEF) towards RAB8A. Interacts (in GDP-bound form) with RPGR, RPGR functions as GEF towards RAB8A. Mg(2+) serves as cofactor. Phosphorylation of Thr-72 in the switch II region by LRRK2 prevents the association of RAB regulatory proteins, including CHM, CHML and RAB GDP dissociation inhibitors GDI1 and GDI2. Phosphorylation by LRRK2 is required for localization to stressed lysosomes.

Its subcellular location is the cell membrane. The protein resides in the golgi apparatus. It is found in the endosome membrane. It localises to the recycling endosome membrane. The protein localises to the cell projection. Its subcellular location is the cilium. The protein resides in the cytoplasmic vesicle. It is found in the phagosome membrane. It localises to the cytoplasm. The protein localises to the cytoskeleton. Its subcellular location is the microtubule organizing center. The protein resides in the centrosome. It is found in the centriole. It localises to the cilium basal body. The protein localises to the midbody. Its subcellular location is the lysosome. The enzyme catalyses GTP + H2O = GDP + phosphate + H(+). Its activity is regulated as follows. Regulated by guanine nucleotide exchange factors (GEFs) such as RAB3IP/Rabin8 and RPGR which promote the exchange of bound GDP for free GTP, GTPase activating proteins (GAPs) which increase the GTP hydrolysis activity, and GDP dissociation inhibitors (GDIs) which inhibit the dissociation of the nucleotide from the GTPase. Activated in response to insulin. Functionally, the small GTPases Rab are key regulators of intracellular membrane trafficking, from the formation of transport vesicles to their fusion with membranes. Rabs cycle between an inactive GDP-bound form and an active GTP-bound form that is able to recruit to membranes different sets of downstream effectors directly responsible for vesicle formation, movement, tethering and fusion. RAB8A is involved in polarized vesicular trafficking and neurotransmitter release. Together with RAB11A, RAB3IP, the exocyst complex, PARD3, PRKCI, ANXA2, CDC42 and DNMBP promotes transcytosis of PODXL to the apical membrane initiation sites (AMIS), apical surface formation and lumenogenesis. Regulates the compacted morphology of the Golgi. Together with MYO5B and RAB11A participates in epithelial cell polarization. Also involved in membrane trafficking to the cilium and ciliogenesis. Together with MICALL2, may also regulate adherens junction assembly. May play a role in insulin-induced transport to the plasma membrane of the glucose transporter GLUT4 and therefore play a role in glucose homeostasis. Involved in autophagy. Participates in the export of a subset of neosynthesized proteins through a Rab8-Rab10-Rab11-dependent endososomal export route. Targeted to and stabilized on stressed lysosomes through LRRK2 phosphorylation. Suppresses stress-induced lysosomal enlargement through EHBP1 and EHNP1L1 effector proteins. This chain is Ras-related protein Rab-8A (RAB8A), found in Pongo abelii (Sumatran orangutan).